We begin with the raw amino-acid sequence, 91 residues long: MATSGRLLCVCLVLGLVFGSLGYPVMEKKRAGKNFDLGTIANWAWQIGEKGGEIIDAIGTSNVPCGDGTCQFGCCEDDRCEDLGCDTFSSS.

A signal peptide spans 1–21 (MATSGRLLCVCLVLGLVFGSL). Residues 22–50 (GYPVMEKKRAGKNFDLGTIANWAWQIGEK) constitute a propeptide that is removed on maturation.

Belongs to the teretoxin M (TM) superfamily. Post-translationally, contains 3 disulfide bonds. As to expression, expressed by the venom duct.

The protein localises to the secreted. The protein is Teretoxin Tan6.2 of Terebra anilis (Auger snail).